We begin with the raw amino-acid sequence, 260 residues long: Acetylglutamate kinase (260 aa).

Substrate contacts are provided by residues 46–47 (GG), arginine 68, and asparagine 160.

Belongs to the acetylglutamate kinase family. ArgB subfamily.

The protein localises to the cytoplasm. The catalysed reaction is N-acetyl-L-glutamate + ATP = N-acetyl-L-glutamyl 5-phosphate + ADP. It functions in the pathway amino-acid biosynthesis; L-arginine biosynthesis; N(2)-acetyl-L-ornithine from L-glutamate: step 2/4. Catalyzes the ATP-dependent phosphorylation of N-acetyl-L-glutamate. The sequence is that of Acetylglutamate kinase from Shewanella sp. (strain MR-4).